Consider the following 93-residue polypeptide: Small ribosomal subunit protein uS19 (93 aa).

Belongs to the universal ribosomal protein uS19 family.

Its function is as follows. Protein S19 forms a complex with S13 that binds strongly to the 16S ribosomal RNA. The polypeptide is Small ribosomal subunit protein uS19 (Mycolicibacterium smegmatis (strain ATCC 700084 / mc(2)155) (Mycobacterium smegmatis)).